The sequence spans 101 residues: MVSPVIDVWREGDVLVLRLYIQPRASRDHIAGAHGDEIKVAITAPPVDGQANSHLIRFLAKEFGVAKSRVILEKGELGRHKQLRIDQPRQLPEVIARLLDV.

This sequence belongs to the UPF0235 family.

The chain is UPF0235 protein SG2030 from Sodalis glossinidius (strain morsitans).